The following is a 136-amino-acid chain: Peptide methionine sulfoxide reductase MsrB (136 aa).

Residues 9-136 enclose the MsrB domain; the sequence is DAEWKALLAE…NSASLDFKPK (128 aa). Zn(2+)-binding residues include cysteine 53, cysteine 56, cysteine 102, and cysteine 105. Catalysis depends on cysteine 125, which acts as the Nucleophile.

It belongs to the MsrB Met sulfoxide reductase family. The cofactor is Zn(2+).

The catalysed reaction is L-methionyl-[protein] + [thioredoxin]-disulfide + H2O = L-methionyl-(R)-S-oxide-[protein] + [thioredoxin]-dithiol. The polypeptide is Peptide methionine sulfoxide reductase MsrB (Polaromonas sp. (strain JS666 / ATCC BAA-500)).